A 307-amino-acid chain; its full sequence is Dof zinc finger protein DOF5.4 (307 aa).

The segment at 51 to 105 (LKCPRCNSLNTKFCYYNNYNLSQPRHFCKNCRRYWTKGGVLRNVPVGGGCRKAKR) adopts a Dof-type zinc-finger fold. Residues C53, C56, C78, and C81 each coordinate Zn(2+). A disordered region spans residues 96–147 (VGGGCRKAKRSKTKQVPSSSSADKPTTTQDDHHVEEKSSTGSHSSSESSSLT). Polar residues predominate over residues 109–123 (KQVPSSSSADKPTTT). Residues 124 to 133 (QDDHHVEEKS) show a composition bias toward basic and acidic residues. Low complexity predominate over residues 134 to 147 (STGSHSSSESSSLT).

The protein localises to the nucleus. Transcription factor that binds specifically to a 5'-AA[AG]G-3' consensus core sequence. Enhances the DNA binding of OBF transcription factors to OCS elements. The chain is Dof zinc finger protein DOF5.4 (DOF5.4) from Arabidopsis thaliana (Mouse-ear cress).